Reading from the N-terminus, the 302-residue chain is Exodeoxyribonuclease (302 aa).

The enzyme catalyses Exonucleolytic cleavage in the 5'- to 3'-direction to yield nucleoside 5'-phosphates.. Functionally, this enzyme is essential for phage DNA replication; it is believed to function in the removal of DNA-linked RNA primers. It is also necessary for host DNA degradation and phage genetic recombination. The sequence is that of Exodeoxyribonuclease (6) from Enterobacteria phage T3 (Bacteriophage T3).